A 213-amino-acid chain; its full sequence is G2/mitotic-specific cyclin-1 (213 aa).

Positions 1 to 23 (MKFSEEKNVSNNPTNFEGGLDSR) are disordered.

This sequence belongs to the cyclin family. Cyclin AB subfamily. As to quaternary structure, interacts with the CDC2 protein kinase to form a serine/threonine kinase holoenzyme complex also known as maturation promoting factor (MPF). The cyclin subunit imparts substrate specificity to the complex. As to expression, only expressed in organs with dividing cells.

Essential for the control of the cell cycle at the G2/M (mitosis) transition. The protein is G2/mitotic-specific cyclin-1 of Medicago sativa (Alfalfa).